Reading from the N-terminus, the 645-residue chain is uncharacterized protein (645 aa).

It belongs to the mycobacterial PPE family.

This is an uncharacterized protein from Mycobacterium tuberculosis (strain CDC 1551 / Oshkosh).